Reading from the N-terminus, the 697-residue chain is DNA ligase (697 aa).

NAD(+)-binding positions include 36 to 40 (DAEYD), 85 to 86 (SL), and Glu-123. Lys-125 acts as the N6-AMP-lysine intermediate in catalysis. 4 residues coordinate NAD(+): Arg-146, Glu-182, Lys-320, and Lys-344. The Zn(2+) site is built by Cys-438, Cys-441, Cys-456, and Cys-462. The 79-residue stretch at 619–697 (PQGNTLAGKT…EDGLKALLGV (79 aa)) folds into the BRCT domain.

It belongs to the NAD-dependent DNA ligase family. LigA subfamily. It depends on Mg(2+) as a cofactor. The cofactor is Mn(2+).

It carries out the reaction NAD(+) + (deoxyribonucleotide)n-3'-hydroxyl + 5'-phospho-(deoxyribonucleotide)m = (deoxyribonucleotide)n+m + AMP + beta-nicotinamide D-nucleotide.. Functionally, DNA ligase that catalyzes the formation of phosphodiester linkages between 5'-phosphoryl and 3'-hydroxyl groups in double-stranded DNA using NAD as a coenzyme and as the energy source for the reaction. It is essential for DNA replication and repair of damaged DNA. The sequence is that of DNA ligase from Bordetella petrii (strain ATCC BAA-461 / DSM 12804 / CCUG 43448).